Consider the following 185-residue polypeptide: Peptidyl-tRNA hydrolase (185 aa).

A tRNA-binding site is contributed by phenylalanine 14. Histidine 19 serves as the catalytic Proton acceptor. The tRNA site is built by tyrosine 64, asparagine 66, and asparagine 112.

This sequence belongs to the PTH family. As to quaternary structure, monomer.

Its subcellular location is the cytoplasm. It carries out the reaction an N-acyl-L-alpha-aminoacyl-tRNA + H2O = an N-acyl-L-amino acid + a tRNA + H(+). Functionally, hydrolyzes ribosome-free peptidyl-tRNAs (with 1 or more amino acids incorporated), which drop off the ribosome during protein synthesis, or as a result of ribosome stalling. In terms of biological role, catalyzes the release of premature peptidyl moieties from peptidyl-tRNA molecules trapped in stalled 50S ribosomal subunits, and thus maintains levels of free tRNAs and 50S ribosomes. This chain is Peptidyl-tRNA hydrolase, found in Exiguobacterium sp. (strain ATCC BAA-1283 / AT1b).